The chain runs to 245 residues: 1-(5-phosphoribosyl)-5-[(5-phosphoribosylamino)methylideneamino] imidazole-4-carboxamide isomerase (245 aa).

Asp-7 functions as the Proton acceptor in the catalytic mechanism. The Proton donor role is filled by Asp-129.

The protein belongs to the HisA/HisF family.

Its subcellular location is the cytoplasm. The catalysed reaction is 1-(5-phospho-beta-D-ribosyl)-5-[(5-phospho-beta-D-ribosylamino)methylideneamino]imidazole-4-carboxamide = 5-[(5-phospho-1-deoxy-D-ribulos-1-ylimino)methylamino]-1-(5-phospho-beta-D-ribosyl)imidazole-4-carboxamide. Its pathway is amino-acid biosynthesis; L-histidine biosynthesis; L-histidine from 5-phospho-alpha-D-ribose 1-diphosphate: step 4/9. The protein is 1-(5-phosphoribosyl)-5-[(5-phosphoribosylamino)methylideneamino] imidazole-4-carboxamide isomerase of Klebsiella pneumoniae subsp. pneumoniae (strain ATCC 700721 / MGH 78578).